A 331-amino-acid polypeptide reads, in one-letter code: WW domain-containing protein C2F3.14c (331 aa).

The tract at residues 1-184 is disordered; sequence MSSSKDCKAT…TNENQAQPSI (184 aa). The span at 9–22 shows a compositional bias: polar residues; it reads ATSNVDQTIPASNV. Residues 23–41 show a composition bias toward low complexity; it reads NSGDFISSNTSSSNSENSN. Polar residues predominate over residues 57–89; that stretch reads SFISENTPKNTFESTQTYENLESISKNEPTSEA. Residues 105–145 show a composition bias toward pro residues; that stretch reads REPPLPNEPVPEEPLPGEPPLPDEPVPEEPLPGEPPLPNEP. Over residues 158 to 184 the composition is skewed to polar residues; that stretch reads SDETVSETSKNDTSNSPTNENQAQPSI. The WW domain maps to 187–220; it reads SEGHRIAAIWDPSQQAYYFWDTLTNTTSWNNPLE. The segment at 290 to 309 is disordered; the sequence is YTRKEMEQMKRRTKEKKEMK. A compositionally biased stretch (basic and acidic residues) spans 292-309; sequence RKEMEQMKRRTKEKKEMK.

Its subcellular location is the nucleus. In Schizosaccharomyces pombe (strain 972 / ATCC 24843) (Fission yeast), this protein is WW domain-containing protein C2F3.14c.